A 492-amino-acid polypeptide reads, in one-letter code: Protein nucleotidyltransferase YdiU (492 aa).

The ATP site is built by glycine 88, glycine 90, arginine 91, lysine 111, aspartate 123, glycine 124, arginine 174, and arginine 181. The active-site Proton acceptor is the aspartate 250. 2 residues coordinate Mg(2+): asparagine 251 and aspartate 260. Aspartate 260 contacts ATP.

The protein belongs to the SELO family. Mg(2+) serves as cofactor. Mn(2+) is required as a cofactor.

It carries out the reaction L-seryl-[protein] + ATP = 3-O-(5'-adenylyl)-L-seryl-[protein] + diphosphate. The catalysed reaction is L-threonyl-[protein] + ATP = 3-O-(5'-adenylyl)-L-threonyl-[protein] + diphosphate. The enzyme catalyses L-tyrosyl-[protein] + ATP = O-(5'-adenylyl)-L-tyrosyl-[protein] + diphosphate. It catalyses the reaction L-histidyl-[protein] + UTP = N(tele)-(5'-uridylyl)-L-histidyl-[protein] + diphosphate. It carries out the reaction L-seryl-[protein] + UTP = O-(5'-uridylyl)-L-seryl-[protein] + diphosphate. The catalysed reaction is L-tyrosyl-[protein] + UTP = O-(5'-uridylyl)-L-tyrosyl-[protein] + diphosphate. Nucleotidyltransferase involved in the post-translational modification of proteins. It can catalyze the addition of adenosine monophosphate (AMP) or uridine monophosphate (UMP) to a protein, resulting in modifications known as AMPylation and UMPylation. The chain is Protein nucleotidyltransferase YdiU from Rhodopseudomonas palustris (strain ATCC BAA-98 / CGA009).